Reading from the N-terminus, the 307-residue chain is Thiohydrolase apmlB (307 aa).

It belongs to the polyketide transferase af380 family.

In terms of biological role, thiohydrolase; part of the gene cluster that mediates the biosynthesis of phaeospelide A, a fungal polyene macrolide with a 34-membered macrolactone ring and an all-trans conjugated hexaene structure. The HR-PKS ApmlA uses acetyl-CoA and malonyl-CoA as its starter and extender units, respectively, and provides the large carbon framework in phaeospelide via 16 cycles of polyketide chain elongation, which is the largest number identified in fungal iterative PKSs thus far. During round 1, the KR domain reduces beta -ketone to an L-oriented hydroxy group, while during later rounds, it provides hydroxy groups in the D-configuration. The characteristic conjugated hexaene moiety is built during the later rounds (10-15), when the KR and DH domains are at work but ER is off. Phylogenetic analysis of the DH domain suggests that a polyene formation is programmed in the DH domain. Finally, the mature ACP-tethered carbon chain is transferred to the serine residue of the thiohydrolase apmlB, followed by intramolecular macrolactonization, generating phaeospelide A. When one elongation cycle during rounds 7-9 is skipped, phaeospelide B is biosynthesized instead. The chain is Thiohydrolase apmlB from Arthrinium phaeospermum (Gymnosporium phaeospermum).